Consider the following 428-residue polypeptide: Serine hydroxymethyltransferase (428 aa).

Residue 120–122 (GHI) participates in (6S)-5,6,7,8-tetrahydrofolate binding. Lysine 226 is subject to N6-(pyridoxal phosphate)lysine.

This sequence belongs to the SHMT family. As to quaternary structure, homodimer. The cofactor is pyridoxal 5'-phosphate.

The protein resides in the cytoplasm. It carries out the reaction 5,10-methylenetetrahydromethanopterin + glycine + H2O = 5,6,7,8-tetrahydromethanopterin + L-serine. Its pathway is amino-acid biosynthesis; glycine biosynthesis; glycine from L-serine: step 1/1. In terms of biological role, catalyzes the reversible interconversion of serine and glycine with tetrahydromethanopterin (H4MPT) serving as the one-carbon carrier. Also exhibits a pteridine-independent aldolase activity toward beta-hydroxyamino acids, producing glycine and aldehydes, via a retro-aldol mechanism. This chain is Serine hydroxymethyltransferase, found in Methanopyrus kandleri (strain AV19 / DSM 6324 / JCM 9639 / NBRC 100938).